A 60-amino-acid chain; its full sequence is uncharacterized protein (60 aa).

This is an uncharacterized protein from Dictyostelium discoideum (Social amoeba).